The sequence spans 303 residues: RELT-like protein 2 (303 aa).

The chain crosses the membrane as a helical span at residues 15–35; sequence LYMLFLLVLVFFLMGLVGFMI. 2 disordered regions span residues 46-67 and 111-303; these read CRTSRGSEPDDAQLQPPEDDDM and SSLQ…AGGV. Residue Ser52 is modified to Phosphoserine. Basic and acidic residues-rich tracts occupy residues 148–158 and 172–188; these read RSKEGKSRPRP and THIEKRYGLHEHRDGSP. Positions 194-212 are enriched in gly residues; the sequence is GSGGGQDPGGGQGPGGGQP.

This sequence belongs to the RELT family. Interacts with RELT, RELL1, OXSR1, PLSCR1 and TRAF2.

It localises to the cell membrane. Induces activation of MAPK14/p38 cascade, when overexpressed. Induces apoptosis, when overexpressed. The chain is RELT-like protein 2 (RELL2) from Bos taurus (Bovine).